We begin with the raw amino-acid sequence, 139 residues long: ATP synthase epsilon chain (139 aa).

It belongs to the ATPase epsilon chain family. F-type ATPases have 2 components, CF(1) - the catalytic core - and CF(0) - the membrane proton channel. CF(1) has five subunits: alpha(3), beta(3), gamma(1), delta(1), epsilon(1). CF(0) has three main subunits: a, b and c.

The protein resides in the cell inner membrane. Its function is as follows. Produces ATP from ADP in the presence of a proton gradient across the membrane. The polypeptide is ATP synthase epsilon chain (Actinobacillus pleuropneumoniae serotype 7 (strain AP76)).